The following is a 666-amino-acid chain: UvrABC system protein B (666 aa).

A Helicase ATP-binding domain is found at 25–412; that stretch reads NGIKNNNKWQ…SENIAEQVIR (388 aa). 38–45 provides a ligand contact to ATP; it reads GVTGSGKT. Positions 91-114 match the Beta-hairpin motif; the sequence is YYDYYQPEAYVAQTDTYIEKDASI. The Helicase C-terminal domain occupies 429–595; that stretch reads QIDDLYSEIK…TIKKAVRDVI (167 aa). The 36-residue stretch at 622 to 657 folds into the UVR domain; that stretch reads DKLIKEFEKEMKEAAKELQFEKAAYFRDKVNELKKK.

This sequence belongs to the UvrB family. In terms of assembly, forms a heterotetramer with UvrA during the search for lesions. Interacts with UvrC in an incision complex.

Its subcellular location is the cytoplasm. In terms of biological role, the UvrABC repair system catalyzes the recognition and processing of DNA lesions. A damage recognition complex composed of 2 UvrA and 2 UvrB subunits scans DNA for abnormalities. Upon binding of the UvrA(2)B(2) complex to a putative damaged site, the DNA wraps around one UvrB monomer. DNA wrap is dependent on ATP binding by UvrB and probably causes local melting of the DNA helix, facilitating insertion of UvrB beta-hairpin between the DNA strands. Then UvrB probes one DNA strand for the presence of a lesion. If a lesion is found the UvrA subunits dissociate and the UvrB-DNA preincision complex is formed. This complex is subsequently bound by UvrC and the second UvrB is released. If no lesion is found, the DNA wraps around the other UvrB subunit that will check the other stand for damage. This chain is UvrABC system protein B, found in Clostridium acetobutylicum (strain ATCC 824 / DSM 792 / JCM 1419 / IAM 19013 / LMG 5710 / NBRC 13948 / NRRL B-527 / VKM B-1787 / 2291 / W).